The following is a 130-amino-acid chain: Large ribosomal subunit protein bL12 (130 aa).

Belongs to the bacterial ribosomal protein bL12 family. As to quaternary structure, homodimer. Part of the ribosomal stalk of the 50S ribosomal subunit. Forms a multimeric L10(L12)X complex, where L10 forms an elongated spine to which 2 to 4 L12 dimers bind in a sequential fashion. Binds GTP-bound translation factors.

Its function is as follows. Forms part of the ribosomal stalk which helps the ribosome interact with GTP-bound translation factors. Is thus essential for accurate translation. The protein is Large ribosomal subunit protein bL12 of Synechococcus sp. (strain WH7803).